The primary structure comprises 332 residues: Nicotianamine synthase 1 (332 aa).

This sequence belongs to the nicotianamine synthase (NAS)-like family. As to expression, expressed in roots.

It catalyses the reaction 3 S-adenosyl-L-methionine = nicotianamine + 3 S-methyl-5'-thioadenosine + 3 H(+). Its function is as follows. Synthesizes nicotianamine, a polyamine that is the first intermediate in the synthesis of the phytosiderophores of the mugineic acid type found in gramineae which serve as a sensor for the physiological iron status within the plant, and/or might be involved in the transport of iron. The sequence is that of Nicotianamine synthase 1 (NAS1) from Oryza sativa subsp. indica (Rice).